We begin with the raw amino-acid sequence, 516 residues long: Cytochrome P450 monooxygenase asR2 (516 aa).

A helical membrane pass occupies residues 9–29 (LNSITFSLLVFLGFVGVSQLI). Asn-248 and Asn-273 each carry an N-linked (GlcNAc...) asparagine glycan. Residue Cys-461 participates in heme binding.

Belongs to the cytochrome P450 family. Heme serves as cofactor.

The protein localises to the membrane. It participates in secondary metabolite biosynthesis; terpenoid biosynthesis. In terms of biological role, cytochrome P450 monooxygenase; part of the gene cluster that mediates the biosynthesis of xenovulene A, an unusual meroterpenoid that has potent inhibitory effects on the human gamma-aminobutyrate A (GABAA) benzodiazepine receptor. The first step of xenovulene A biosynthesis is the biosynthesis of 3-methylorcinaldehyde performed by the non-reducing polyketide synthase aspks1. The salicylate hydroxylase asL1 then catalyzes the oxidative dearomatization of 3-methylorcinaldehyde to yield a dearomatized hydroxycyclohexadione. The 2-oxoglutarate-dependent dioxygenase asL3 further catalyzes the oxidative ring expansion to provide the first tropolone metabolite. The cytochrome P450 monooxygenase asR2 allows the synthesis of tropolone hemiacetal. In parallel, a previously unrecognised class of terpene cyclase, asR6, produces alpha-humulene from farnesylpyrophosphate (FPP). The putative Diels-Alderase asR5 probably catalyzes the formation of the tropolone-humulene skeleton by linking humulene and the polyketide moiety. Oxidative-ring contractions catalyzed by asL4 and asL6 then processively remove carbon atoms from the polyketide to yield xenovulene A. This is Cytochrome P450 monooxygenase asR2 from Sarocladium schorii (Acremonium strictum (strain IMI 501407)).